The chain runs to 300 residues: (R)-3-hydroxydecanoyl-ACP:CoA transacylase (300 aa).

The region spanning 29–253 (TIILVNGSLS…HTIRNAGHFI (225 aa)) is the AB hydrolase-1 domain.

It participates in polyester biosynthesis; polyhydroxyalkanoate biosynthesis. Functionally, catalyzes the transfer of the acyl moiety from in vitro synthesized 3-hydroxydecanoyl-CoA to acyl carrier protein. The polypeptide is (R)-3-hydroxydecanoyl-ACP:CoA transacylase (phaG) (Pseudomonas aeruginosa (strain ATCC 15692 / DSM 22644 / CIP 104116 / JCM 14847 / LMG 12228 / 1C / PRS 101 / PAO1)).